The primary structure comprises 419 residues: Carboxypeptidase A2 (419 aa).

Residues 1–18 form the signal peptide; the sequence is MAMRLILFFGALFGHIYC. Residues 19-114 constitute a propeptide, activation peptide; the sequence is LETFVGDQVL…EMLFNRRRER (96 aa). In terms of domain architecture, Peptidase M14 spans 122–414; that stretch reads AYHTLEEISQ…LGLKAIMEHV (293 aa). Residues His-179 and Glu-182 each coordinate Zn(2+). Residues 179–182, Arg-237, and 254–255 contribute to the substrate site; these read HARE and NR. A disulfide bond links Cys-248 and Cys-271. His-306 lines the Zn(2+) pocket. 307-308 is a binding site for substrate; sequence SY. A disulfide bridge links Cys-320 with Cys-354. Position 358 (Tyr-358) interacts with substrate. Glu-380 (proton donor/acceptor) is an active-site residue.

It belongs to the peptidase M14 family. Zn(2+) is required as a cofactor.

Its subcellular location is the secreted. The enzyme catalyses Similar to that of carboxypeptidase A (EC 3.4.17.1), but with a preference for bulkier C-terminal residues.. In terms of biological role, carboxypeptidase that catalyzes the release of a C-terminal amino acid, with a preference for large aromatic C-terminal residues. The polypeptide is Carboxypeptidase A2 (CPA2) (Homo sapiens (Human)).